A 354-amino-acid polypeptide reads, in one-letter code: Nucleoporin seh1 (354 aa).

WD repeat units follow at residues 10-49 (DHKD…KWNV), 55-96 (AHSG…KVSS), 112-153 (DSRT…NLSQ), 161-209 (SNKL…RKCV), 216-259 (DITD…TDIS), and 270-309 (EHNC…QWRC).

This sequence belongs to the WD repeat SEC13 family. As to quaternary structure, probable component of the nuclear pore complex (NPC). Component of the GATOR complex consisting of mio, Nup44A/Seh1, Im11, Nplr3, Nplr2, Wdr24, Wdr59 and Sec13. Within the GATOR complex, probable component of the GATOR2 subcomplex which is likely composed of mio, Nup44A/Seh1, Wdr24, Wdr59 and Sec13. Interacts with mio. Interacts with Wdr24. The GATOR2 complex associates with unmet in the absence of S-adenosyl-L-methionine; the mio-Wdr24-Nup44A subcomplex is essential and sufficient for this interaction while Wdr59 and Sec13 are dispensable. This association acts as a nutrient sensor to inhibit mTORC1 signaling in the absence of methionine. In terms of tissue distribution, expressed in ovarian cysts.

The protein localises to the nucleus envelope. It localises to the lysosome. Probable component of the nuclear pore complex (NPC). Involved in maintaining the localization of another nucleoporin Mgtor to the nuclear envelope of early meiotic female germline cells. It is not involved in recruiting the nucleoporins Mgtor, Nup107, Nup153 and FG-containing nucleoporins to the NPC. Functionally, an essential component of the GATOR subcomplex GATOR2 which functions as an activator of the amino acid-sensing branch of the mTORC1 signaling pathway. The two GATOR subcomplexes, GATOR1 and GATOR2, regulate the mTORC1 pathway in order to mediate metabolic homeostasis, female gametogenesis and the response to amino acid limitation and complete starvation. GATOR2 activates the mTORC1 signaling pathway through the inhibition of the GATOR1 subcomplex, controlling the switch to cell proliferation growth under nutrient replete conditions and growth during female oocyte development. This component is required for activating mTORC1 specifically in germline cells to promote cell growth and maintain the oocyte fate, probably influences the organization and/or function of microtubules within ovarian cysts, and promotes accumulation of another GATOR2 complex member mio in germline and somatic tissues. GATOR1 and GATOR2 act at different stages of oogenesis to regulate mTORC1 in order to control meiotic entry and promote oocyte growth and development. After exactly four mitotic cyst divisions, the GATOR1 complex members (Iml1, Nprl2 and Nprl3) down-regulate mTORC1 to slow cellular metabolism and promote the mitotic/meiotic transition. At later stages of oogenesis, the mio and Nup44A components of the GATOR2 complex inhibit GATOR1 and thus activate mTORC1 to promote meiotic progression, and drive oocyte growth and development. In addition to its role in the regulation of the mTORC1 complex, functions independently of mTORC1 to prevent the inappropriate accumulation of autolysosomes in germline tissues. The chain is Nucleoporin seh1 from Drosophila melanogaster (Fruit fly).